The primary structure comprises 407 residues: Inositol-tetrakisphosphate 1-kinase (407 aa).

A 1D-myo-inositol 1,3,4-trisphosphate-binding site is contributed by K18. ATP is bound by residues R106 and K157. One can recognise an ATP-grasp domain in the interval 117–341 (EAYMQDERIC…RSKLLAEQTG (225 aa)). Residues H167 and K199 each contribute to the 1D-myo-inositol 1,3,4-trisphosphate site. Residues 188–199 (QSFINHNAVLYK), S214, S232, and S236 contribute to the ATP site. Residues D281, D295, and N297 each coordinate Mg(2+). Position 297 (N297) interacts with 1D-myo-inositol 1,3,4-trisphosphate.

The protein belongs to the ITPK1 family. Monomer. Requires Mg(2+) as cofactor.

It catalyses the reaction 1D-myo-inositol 3,4,5,6-tetrakisphosphate + ATP = 1D-myo-inositol 1,3,4,5,6-pentakisphosphate + ADP + H(+). It carries out the reaction 1D-myo-inositol 1,3,4-trisphosphate + ATP = 1D-myo-inositol 1,3,4,5-tetrakisphosphate + ADP + H(+). The enzyme catalyses 1D-myo-inositol 1,3,4-trisphosphate + ATP = 1D-myo-inositol 1,3,4,6-tetrakisphosphate + ADP + H(+). The catalysed reaction is 1D-myo-inositol 3,4,6-trisphosphate + ATP = 1D-myo-inositol 1,3,4,6-tetrakisphosphate + ADP + H(+). It catalyses the reaction 1D-myo-inositol 1,3,4-trisphosphate + 1D-myo-inositol 1,3,4,5,6-pentakisphosphate = 1D-myo-inositol 3,4,5,6-tetrakisphosphate + 1D-myo-inositol 1,3,4,6-tetrakisphosphate. It carries out the reaction 1D-myo-inositol 1,3,4-trisphosphate + 1D-myo-inositol 1,3,4,5,6-pentakisphosphate = 1D-myo-inositol 3,4,5,6-tetrakisphosphate + 1D-myo-inositol 1,3,4,5-tetrakisphosphate. Its function is as follows. Kinase that can phosphorylate various inositol polyphosphate such as Ins(3,4,5,6)P4 or Ins(1,3,4)P3. Phosphorylates Ins(3,4,5,6)P4 at position 1 to form Ins(1,3,4,5,6)P5. This reaction is thought to have regulatory importance, since Ins(3,4,5,6)P4 is an inhibitor of plasma membrane Ca(2+)-activated Cl(-) channels, while Ins(1,3,4,5,6)P5 is not. Also phosphorylates Ins(1,3,4)P3 on O-5 and O-6 to form Ins(1,3,4,6)P4, an essential molecule in the hexakisphosphate (InsP6) pathway. Also acts as an inositol polyphosphate phosphatase that dephosphorylates Ins(1,3,4,5)P4 and Ins(1,3,4,6)P4 to Ins(1,3,4)P3, and Ins(1,3,4,5,6)P5 to Ins(3,4,5,6)P4. May also act as an isomerase that interconverts the inositol tetrakisphosphate isomers Ins(1,3,4,5)P4 and Ins(1,3,4,6)P4 in the presence of ADP and magnesium. Probably acts as the rate-limiting enzyme of the InsP6 pathway. Modifies TNF-alpha-induced apoptosis by interfering with the activation of TNFRSF1A-associated death domain. Plays an important role in MLKL-mediated necroptosis. Produces highly phosphorylated inositol phosphates such as inositolhexakisphosphate (InsP6) which bind to MLKL mediating the release of an N-terminal auto-inhibitory region leading to its activation. Essential for activated phospho-MLKL to oligomerize and localize to the cell membrane during necroptosis. The polypeptide is Inositol-tetrakisphosphate 1-kinase (ITPK1) (Gallus gallus (Chicken)).